A 64-amino-acid polypeptide reads, in one-letter code: MVRYRRHSRSRSRSRYRRRRRRRLRNRRRRYRRSRRGRRRRRRGSRRGYSRRRYQSRRRRRRRY.

A disordered region spans residues 1 to 64; that stretch reads MVRYRRHSRS…QSRRRRRRRY (64 aa).

It belongs to the protamine P1 family. Testis.

It is found in the nucleus. The protein localises to the chromosome. Its function is as follows. Protamines substitute for histones in the chromatin of sperm during the haploid phase of spermatogenesis. They compact sperm DNA into a highly condensed, stable and inactive complex. In Dromiciops gliroides (Monito del Monte), this protein is Sperm protamine P1 (PRM1).